Here is a 175-residue protein sequence, read N- to C-terminus: Gamma-crystallin-1 (175 aa).

Beta/gamma crystallin 'Greek key' domains are found at residues 2–40 (GKIFFYEERNFQGRHYECGSDYSDLSSYFNRCNSIRVEG) and 41–83 (GNWI…RFLP). Residues 84 to 88 (NYQGQ) are connecting peptide. Beta/gamma crystallin 'Greek key' domains lie at 89–129 (YKMR…NVFD) and 130–172 (GHWM…RRVY).

It belongs to the beta/gamma-crystallin family. As to quaternary structure, monomer.

Crystallins are the dominant structural components of the vertebrate eye lens. This chain is Gamma-crystallin-1 (cryg1), found in Xenopus laevis (African clawed frog).